We begin with the raw amino-acid sequence, 198 residues long: Nucleoid occlusion factor SlmA (198 aa).

The HTH tetR-type domain occupies 10–70; sequence NRREEILQSL…SLIEFIEDSL (61 aa). A DNA-binding region (H-T-H motif) is located at residues 33-52; that stretch reads TTAKLAASVGVSEAALYRHF. The stretch at 117–144 forms a coiled coil; that stretch reads EQDRLQGRINQLFERIEAQLRQVLREKR.

It belongs to the nucleoid occlusion factor SlmA family. As to quaternary structure, homodimer. Interacts with FtsZ.

The protein localises to the cytoplasm. It localises to the nucleoid. In terms of biological role, required for nucleoid occlusion (NO) phenomenon, which prevents Z-ring formation and cell division over the nucleoid. Acts as a DNA-associated cell division inhibitor that binds simultaneously chromosomal DNA and FtsZ, and disrupts the assembly of FtsZ polymers. SlmA-DNA-binding sequences (SBS) are dispersed on non-Ter regions of the chromosome, preventing FtsZ polymerization at these regions. In Escherichia coli (strain 55989 / EAEC), this protein is Nucleoid occlusion factor SlmA.